Here is a 61-residue protein sequence, read N- to C-terminus: Alpha-conotoxin EIIA (61 aa).

A signal peptide spans 1–16 (MFIVFLLVVLATTVGS). Positions 17–40 (FTLDRVLEGRNAAAIDNALDQRDP) are excised as a propeptide. Pyrrolidone carboxylic acid is present on Gln-43. At Pro-45 the chain carries Hydroxyproline. Intrachain disulfides connect Cys-47-Cys-53 and Cys-48-Cys-58. A Cysteine amide modification is found at Cys-58.

This sequence belongs to the conotoxin A superfamily. In terms of tissue distribution, expressed by the venom duct.

The protein localises to the secreted. In terms of biological role, alpha-conotoxins bind to the nicotinic acetylcholine receptors (nAChR) and inhibit them. This peptide potently blocks muscular nicotinic acetylcholine receptor (CHRNA1-CHRNB1-CHRNG-CHRND), and has no effect on neuronal receptors. It is able to totally displace [125I]-Bgtx from the Torpedo receptor with a complete inhibition in the high micromolar range. It produces a biphasic inhibition curve which fits nicely with a two-site model (Ki of 0.46 and 105 nM). In Conus ermineus (Agate cone), this protein is Alpha-conotoxin EIIA.